A 556-amino-acid chain; its full sequence is Urocanate hydratase (556 aa).

NAD(+) is bound by residues 52 to 53 (GG), Gln-130, 176 to 178 (GMG), Glu-196, Arg-201, 242 to 243 (NA), 263 to 267 (QTSAH), 273 to 274 (YL), and Tyr-322. The active site involves Cys-410. Residue Gly-492 participates in NAD(+) binding.

This sequence belongs to the urocanase family. NAD(+) is required as a cofactor.

It is found in the cytoplasm. It catalyses the reaction 4-imidazolone-5-propanoate = trans-urocanate + H2O. It functions in the pathway amino-acid degradation; L-histidine degradation into L-glutamate; N-formimidoyl-L-glutamate from L-histidine: step 2/3. Catalyzes the conversion of urocanate to 4-imidazolone-5-propionate. This chain is Urocanate hydratase, found in Bradyrhizobium sp. (strain ORS 278).